A 303-amino-acid chain; its full sequence is GPN-loop GTPase 2 (303 aa).

29-34 (GSGKST) contributes to the GTP binding site. Residues 85–87 (GPN) carry the Gly-Pro-Asn (GPN)-loop; involved in dimer interface motif. 187–190 (SKMD) serves as a coordination point for GTP.

It belongs to the GPN-loop GTPase family. Heterodimers with gpn1 or gpn3. Binds to RNA polymerase II (RNAPII).

In terms of biological role, small GTPase required for proper localization of RNA polymerase II and III (RNAPII and RNAPIII). May act at an RNAP assembly step prior to nuclear import. The chain is GPN-loop GTPase 2 from Xenopus tropicalis (Western clawed frog).